A 101-amino-acid chain; its full sequence is Stefin-C (101 aa).

N-acetylmethionine is present on Met1. The Secondary area of contact signature appears at 49 to 53 (QVVAG).

The protein belongs to the cystatin family.

It is found in the cytoplasm. In terms of biological role, strong inhibitor of papain and cathepsin L but poor inhibitor of cathepsin B. The sequence is that of Stefin-C from Bos taurus (Bovine).